The primary structure comprises 238 residues: Uridylate kinase (238 aa).

12 to 15 (KLSG) lines the ATP pocket. G54 lines the UMP pocket. Positions 55 and 59 each coordinate ATP. Residues D74 and 135 to 142 (TGNPFFTT) each bind UMP. Residues T162, Y168, and D171 each contribute to the ATP site.

It belongs to the UMP kinase family. As to quaternary structure, homohexamer.

The protein resides in the cytoplasm. It catalyses the reaction UMP + ATP = UDP + ADP. It participates in pyrimidine metabolism; CTP biosynthesis via de novo pathway; UDP from UMP (UMPK route): step 1/1. Its activity is regulated as follows. Inhibited by UTP. Catalyzes the reversible phosphorylation of UMP to UDP. The sequence is that of Uridylate kinase from Bordetella pertussis (strain Tohama I / ATCC BAA-589 / NCTC 13251).